A 1221-amino-acid chain; its full sequence is MAEAHKYKKLTPIEHVLTRPEMYIGSLDTTATPMFIYDEQKGHMVWETVKLNHGLLKIVDEILLNASDNISNRSARMTYIRVTITDTGEITIENDGAGIPIVRSREHKLYIPEMVFGHLLTSSNYDDDNQNAVAGRHGYGAKLTNILSLSFSVCCRTNGREFHMSWQDHMRKATAPRVSNVGTKEKNVTRVKFLPDYERFGMKEKKISNDMKRVLYKRIMDLSAMFPNIQITLNGSSFGFKSFKDYATLYSAMTPKGEKPPPPYVYESKSGCVAFIPSVVPGVRRMFGVVNGVVTYNGGTHCNAAQDILTGCLDGVERELKKENKVMDTNRVLRHFTILVFLVQVQPKFDSQNKARLVSTPTMPRVPRQDVMKYLLRMPFLEAHVSTITGQLAQELNKEIGTGRRMSSKTLLTSITKLVDATSTRRDPKHTRTLIVTEGDSAKALAQNSLSSDQKRYTGVFPLRGKLLNVRNKNLKRLRNCKELQELFCALGLELDKDYTDADELRYQRILIMTDQDADGSHIKGLVINAFESLWPSLLVRNPGFISIFSTPIVKARLRDKSVVSFFSMKEFHKWQRSNANTPYTCKYYKGLGTSTTAEGKEYFKDMEKHTMRLLVDRSDHKLLDNVFDSQEVEWRKDWMTKANAFTGEVDIDRSKKMLTVTDFVHKEMVHFALVGNARALAHSVDGLKPSQRKIIWALMRRSGNEAAKVAQLSGYISEASAFHHGETSLQETMIKMAQSFTGGNNVNLLVPEGQFGSRQQLGNDHAAPRYIFTKLSKVARLLFPSEDDPLLDYIVEEGQQVEPNHYVPILPLLLCNGSVGIGFGFSSNIPPFHRLDVSAAVRAMISGERAKSVVRRLVPWAVGFQGEIRRGPEGEFIAVGTYTYCKGGRVHVTELPWTCSVEAFREHISYLATKDIVNRIADYSGANHVDIDVEVAQGAVNTYAECESELGLTQRIHINGTVFSPNGTLSPLESDLTPVLQWHYDRRLDLYKKRRQRNLTLLEQELAREKSTLKFVQHFGAGHIDFANATEATLEKVCSKLGLVRVDDSFDYILRKPITFYTKTSFENLLKKIAETERRIEALKKTTPVQLWLGELDQFDRFFQDHEKKMVEAILKERRQRSPPSDLLPGLQQPRLEVEEAKGGKKFEMRVQVRKYVPPPTKRGAGGRSDGDGGATAAGAAAAVGGRGEKKGPGRAGGVRRMVLDALAKRVTRLLPRLLF.

ATP-binding positions include Asn65, Asn94, 122–124 (SSN), 135–142 (GRHGYGAK), and 352–354 (QNK). The region spanning 432-546 (RTLIVTEGDS…SLLVRNPGFI (115 aa)) is the Toprim domain. Residues Glu438, Asp515, and Asp517 each coordinate Mg(2+). One can recognise a Topo IIA-type catalytic domain in the interval 681–1097 (LAHSVDGLKP…TPVQLWLGEL (417 aa)). Tyr771 (O-(5'-phospho-DNA)-tyrosine intermediate) is an active-site residue. The tract at residues 952–961 (GLTQRIHING) is interaction with DNA. The interval 1158–1198 (VPPPTKRGAGGRSDGDGGATAAGAAAAVGGRGEKKGPGRAG) is disordered. The segment covering 1165–1177 (GAGGRSDGDGGAT) has biased composition (gly residues).

It belongs to the type II topoisomerase family. Homodimer. Mg(2+) is required as a cofactor. Mn(2+) serves as cofactor. Requires Ca(2+) as cofactor.

It localises to the nucleus. The catalysed reaction is ATP-dependent breakage, passage and rejoining of double-stranded DNA.. Its function is as follows. Control of topological states of DNA by transient breakage and subsequent rejoining of DNA strands. Topoisomerase II makes double-strand breaks. The sequence is that of DNA topoisomerase 2 (TOP2) from Trypanosoma brucei brucei.